Consider the following 378-residue polypeptide: Chaperone protein DnaJ (378 aa).

Residues 5-70 (DYYEVLGVAK…QKRAAYDQYG (66 aa)) form the J domain. The CR-type zinc-finger motif lies at 138-216 (GYDTQIRVPS…CHGSGKVKET (79 aa)). 8 residues coordinate Zn(2+): Cys-151, Cys-154, Cys-168, Cys-171, Cys-190, Cys-193, Cys-204, and Cys-207. 4 CXXCXGXG motif repeats span residues 151-158 (CEVCHGSG), 168-175 (CPTCHGQG), 190-197 (CPKCHGTG), and 204-211 (CVHCHGSG).

The protein belongs to the DnaJ family. As to quaternary structure, homodimer. Zn(2+) is required as a cofactor.

The protein localises to the cytoplasm. Functionally, participates actively in the response to hyperosmotic and heat shock by preventing the aggregation of stress-denatured proteins and by disaggregating proteins, also in an autonomous, DnaK-independent fashion. Unfolded proteins bind initially to DnaJ; upon interaction with the DnaJ-bound protein, DnaK hydrolyzes its bound ATP, resulting in the formation of a stable complex. GrpE releases ADP from DnaK; ATP binding to DnaK triggers the release of the substrate protein, thus completing the reaction cycle. Several rounds of ATP-dependent interactions between DnaJ, DnaK and GrpE are required for fully efficient folding. Also involved, together with DnaK and GrpE, in the DNA replication of plasmids through activation of initiation proteins. The polypeptide is Chaperone protein DnaJ (Burkholderia ambifaria (strain MC40-6)).